A 117-amino-acid polypeptide reads, in one-letter code: G antigen 12J (117 aa).

The interval 1–117 (MSWRGRSTYY…PEEGEKQSQC (117 aa)) is disordered. Composition is skewed to acidic residues over residues 32-45 (FSDE…EEGE) and 87-96 (ECEDGPDGQE). A compositionally biased stretch (basic and acidic residues) spans 103-117 (EEVKTPEEGEKQSQC).

The protein belongs to the GAGE family.

This Homo sapiens (Human) protein is G antigen 12J (GAGE12J).